The chain runs to 262 residues: MANPYERGPNPTDALLEARSGPFSVSEERASRFGADGFGGGTIYYPRENNTYGAVAISPGYTGTQASVAWLGERIASHGFVVITIDTNTTLDQPDSRARQLNAALDYMINDASSAVRSRIDSSRLAVMGHSMGGGGTLRLASQRPDLKAAIPLTPWHLNKNWSSVRVPTLIIGADLDTIAPVLTHARPFYNSLPTSISKAYLELDGATHFAPNIPNKIIGKYSVAWLKRFVDNDTRYTQFLCPGPRDGLFGEVEEYRSTCPF.

Position 61 (Tyr61) interacts with poly(ethylene terephthalate). The active-site Nucleophile is the Ser131. Residues Met132 and Trp156 each coordinate poly(ethylene terephthalate). Catalysis depends on charge relay system residues Asp177 and His209. Cysteines 242 and 260 form a disulfide.

It belongs to the AB hydrolase superfamily.

Its subcellular location is the secreted. The protein resides in the periplasm. It carries out the reaction a butanoate ester + H2O = an aliphatic alcohol + butanoate + H(+). It catalyses the reaction an acetyl ester + H2O = an aliphatic alcohol + acetate + H(+). The catalysed reaction is (ethylene terephthalate)(n) + H2O = (ethylene terephthalate)(n-1) + 4-[(2-hydroxyethoxy)carbonyl]benzoate + H(+). The enzyme catalyses cutin + H2O = cutin monomers.. Its function is as follows. Catalyzes the hydrolysis of cutin, a polyester that forms the structure of plant cuticle. Shows esterase activity towards p-nitrophenol-linked aliphatic esters (pNP-aliphatic esters). Capable of degrading the plastic poly(ethylene terephthalate) (PET), the most abundant polyester plastic in the world. Capable of degrading the bioplastic poly(lactic acid) (PLLA). This chain is Cutinase 2, found in Thermobifida cellulosilytica.